A 506-amino-acid polypeptide reads, in one-letter code: Protein MGF 505-9R (506 aa).

The protein belongs to the asfivirus MGF 505 family.

Functionally, plays a role in virus cell tropism, and may be required for efficient virus replication in macrophages. The chain is Protein MGF 505-9R from African swine fever virus (isolate Tick/South Africa/Pretoriuskop Pr4/1996) (ASFV).